The following is a 480-amino-acid chain: NADH-quinone oxidoreductase subunit N (480 aa).

Helical transmembrane passes span 12-32 (LLIPELVLAGGAMALLMLGVF), 41-61 (LVQWLTVGLLAAAALAALFLV), 80-100 (FSKTAIGLVAAIAMLLAMPYL), 105-125 (LGKIEYPVLVVLAVTGMMMMV), 130-150 (LIAMYMGIELQSLALYVLAAF), 165-185 (FVLGALSSGLLLYGASLVYGF), 204-224 (IGLTVGLVFVICGLAFKVSAA), 237-257 (APTPVTAFFATAPKFAAIVLL), 275-295 (VIWMIAVLSMAVGAFGALTQQ), 300-320 (LMAYSSISNMGYALVAVAAAS), 326-346 (ALLVFMVLYMVGAIGSFATIL), 372-392 (GWSMTALMFSIGGLPFMVGFF), 406-428 (LMILAVLAVLFSVVGAAYYLRIV), and 450-470 (IARIAGLATVLLLPVLGWLVF).

Belongs to the complex I subunit 2 family. NDH-1 is composed of 14 different subunits. Subunits NuoA, H, J, K, L, M, N constitute the membrane sector of the complex.

Its subcellular location is the cell inner membrane. It carries out the reaction a quinone + NADH + 5 H(+)(in) = a quinol + NAD(+) + 4 H(+)(out). In terms of biological role, NDH-1 shuttles electrons from NADH, via FMN and iron-sulfur (Fe-S) centers, to quinones in the respiratory chain. The immediate electron acceptor for the enzyme in this species is believed to be ubiquinone. Couples the redox reaction to proton translocation (for every two electrons transferred, four hydrogen ions are translocated across the cytoplasmic membrane), and thus conserves the redox energy in a proton gradient. The chain is NADH-quinone oxidoreductase subunit N from Maricaulis maris (strain MCS10) (Caulobacter maris).